A 382-amino-acid chain; its full sequence is S-adenosylmethionine synthase (382 aa).

His-14 provides a ligand contact to ATP. Asp-16 lines the Mg(2+) pocket. Glu-42 is a K(+) binding site. L-methionine is bound by residues Glu-55 and Gln-91. The flexible loop stretch occupies residues 91–101 (QSENIAMGVNL). Residues 156 to 158 (DMK), 222 to 223 (KF), Asp-231, 237 to 238 (RK), Ala-254, and Lys-258 each bind ATP. Asp-231 contacts L-methionine. Position 262 (Lys-262) interacts with L-methionine.

Belongs to the AdoMet synthase family. In terms of assembly, homotetramer; dimer of dimers. Mg(2+) serves as cofactor. K(+) is required as a cofactor.

Its subcellular location is the cytoplasm. It carries out the reaction L-methionine + ATP + H2O = S-adenosyl-L-methionine + phosphate + diphosphate. It participates in amino-acid biosynthesis; S-adenosyl-L-methionine biosynthesis; S-adenosyl-L-methionine from L-methionine: step 1/1. Catalyzes the formation of S-adenosylmethionine (AdoMet) from methionine and ATP. The overall synthetic reaction is composed of two sequential steps, AdoMet formation and the subsequent tripolyphosphate hydrolysis which occurs prior to release of AdoMet from the enzyme. This chain is S-adenosylmethionine synthase, found in Mycoplasmopsis synoviae (strain 53) (Mycoplasma synoviae).